We begin with the raw amino-acid sequence, 51 residues long: Zinc metalloproteinase-disintegrin-like crovidisin (51 aa).

Residues 1-12 (AMVTKNNGDLDK) enclose the Peptidase M12B domain. The Disintegrin domain maps to 13 to 18 (SGTECR). Residue N29 is glycosylated (N-linked (GlcNAc...) asparagine).

Belongs to the venom metalloproteinase (M12B) family. P-III subfamily. P-IIIa sub-subfamily. Monomer. Zn(2+) serves as cofactor. As to expression, expressed by the venom gland.

The protein resides in the secreted. In terms of biological role, snake venom zinc metalloproteinase-disintegrin-like that blocks the interaction between platelets and collagen fibers through its binding to collagen fibers, resulting in the blockade of collagen-mediated platelet functions such as adhesion, release reaction, thromboxane formation, and aggregation. Binds selectively to collagen type I with high affinity. Also exerts proteolytic activity to matrix. This Crotalus viridis viridis (Prairie rattlesnake) protein is Zinc metalloproteinase-disintegrin-like crovidisin.